The primary structure comprises 1535 residues: ABC multidrug transporter atrF (1535 aa).

A disordered region spans residues 1–115 (MADDHRQPEA…DEQASSTDEY (115 aa)). The N-linked (GlcNAc...) asparagine glycan is linked to N33. The segment covering 34-45 (TTSTSETDASAD) has biased composition (low complexity). Over residues 46 to 76 (ADARWGERNQGDPVSRRGAMEEFEEMRREVT) the composition is skewed to basic and acidic residues. Residues 79 to 93 (SLHRTRSAKDARRRS) are compositionally biased toward basic residues. N-linked (GlcNAc...) asparagine glycosylation is found at N149, N274, N287, and N351. The 243-residue stretch at 185–427 (VPALHFGKRP…FVDLGFYCPE (243 aa)) folds into the ABC transporter 1 domain. 7 helical membrane passes run 540–560 (LYTK…LFYG), 573–593 (GALF…MPAV), 618–638 (VVVD…IVYF), 646–666 (ASKF…ITSL), 680–700 (AVRF…YVIP), 703–723 (GLID…LSYS), and 791–811 (FGVV…AAEV). Positions 834-868 (KAQNGKGNDEEQVQNTGDNAALSRGEAKSSSSGEA) are disordered. The ABC transporter 2 domain maps to 879–1117 (FTWSNVEYTV…DVIKYFADRG (239 aa)). N892 carries an N-linked (GlcNAc...) asparagine glycan. 915 to 922 (GASGAGKT) contributes to the ATP binding site. The next 6 membrane-spanning stretches (helical) occupy residues 1212 to 1232 (YGKL…FWML), 1246 to 1266 (IFLI…KFYI), 1295 to 1315 (IPMA…PVGF), 1320 to 1340 (SSAG…ASWG), 1342 to 1362 (WICA…FFFV), and 1384 to 1406 (WMYY…FPSV). The N-linked (GlcNAc...) asparagine glycan is linked to N1459. Transmembrane regions (helical) follow at residues 1477-1497 (CFGI…FFIY) and 1503-1523 (GWSF…EGVK).

This sequence belongs to the ABC transporter superfamily. ABCG family. PDR (TC 3.A.1.205) subfamily.

It localises to the cell membrane. It carries out the reaction voriconazole(in) + ATP + H2O = voriconazole(out) + ADP + phosphate + H(+). Its function is as follows. Pleiotropic ABC efflux transporter involved in the basal level of azole susceptibility. Confers resistance to voriconazole. This chain is ABC multidrug transporter atrF, found in Aspergillus flavus (strain ATCC 200026 / FGSC A1120 / IAM 13836 / NRRL 3357 / JCM 12722 / SRRC 167).